The following is a 223-amino-acid chain: Ubiquitin carboxyl-terminal hydrolase isozyme L1 (223 aa).

Met1 is modified (N-acetylmethionine). The UCH catalytic domain occupies 2 to 221; sequence QLKPMEINPE…VRFSAVALCK (220 aa). Residues 5–10 form an interaction with ubiquitin region; the sequence is PMEINP. Cys90 acts as the Nucleophile in catalysis. Ser125 carries the post-translational modification Phosphoserine. His161 serves as the catalytic Proton donor. The tract at residues 211-216 is interaction with ubiquitin; sequence EVRFSA. Cys220 is lipidated: S-farnesyl cysteine. Positions 221–223 are cleaved as a propeptide — removed in mature form; sequence KCA.

Belongs to the peptidase C12 family. In terms of assembly, monomer. Homodimer. Interacts with COPS5 and SNCA. In terms of processing, O-glycosylated.

Its subcellular location is the cytoplasm. It localises to the endoplasmic reticulum membrane. The enzyme catalyses Thiol-dependent hydrolysis of ester, thioester, amide, peptide and isopeptide bonds formed by the C-terminal Gly of ubiquitin (a 76-residue protein attached to proteins as an intracellular targeting signal).. Its function is as follows. Ubiquitin-protein hydrolase involved both in the processing of ubiquitin precursors and of ubiquitinated proteins. This enzyme is a thiol protease that recognizes and hydrolyzes a peptide bond at the C-terminal glycine of ubiquitin. Also binds to free monoubiquitin and may prevent its degradation in lysosomes. The homodimer may have ATP-independent ubiquitin ligase activity. The chain is Ubiquitin carboxyl-terminal hydrolase isozyme L1 (UCHL1) from Monodelphis domestica (Gray short-tailed opossum).